Reading from the N-terminus, the 284-residue chain is MAKKVSKFFRIGVEGDTCDGRVISAQDIQEMAETFDPRVYGCRINLEHLRGILPDGIFKRYGDVAELKAEKIDDDSALKGKWALFAKITPTDDLIAMNKAAQKVYTSMEIQPNFANTGKCYLVGLAVTDDPASLGTEYLEFCRTAKHNPLNRFKLSPENLISVATPVELEFEDLPETVFTALTEKVKSIFGRKQASDDARLNDVHEAVTAVAEHVQEKLSATEQRLAEMETAFSALKQEVTDRADETSQAFTRLKNSLDHTESLTQQRRSKATGGGGDALMTNC.

Residues Asp-19, His-48, and Ser-107 contribute to the active site. Positions 206–243 (EAVTAVAEHVQEKLSATEQRLAEMETAFSALKQEVTDR) form a coiled coil. The disordered stretch occupies residues 258–284 (LDHTESLTQQRRSKATGGGGDALMTNC).

The protein belongs to the P2likevirus scaffolding protein family. As to quaternary structure, homomultimer. Post-translationally, autocleaves itself into an N-terminal fragment containing the protease activity, that remains in the capsid following maturation.

Functionally, scaffolding protein and protease involved in the icosahedric procapsid assembly. Coassembles with the capsid proteins to form the procapsid, in which the scaffolding protein is found within the external shell of icosahedrally arranged capsid protein subunits. In a subsequent step the scaffolding protein molecules are cleaved by the viral protease activity. This is Capsid assembly scaffolding protein (O) from Enterobacteriaceae (Bacteriophage P2).